Consider the following 98-residue polypeptide: Integration host factor subunit alpha (98 aa).

The disordered stretch occupies residues 54–74 (LRDKASRPGRNPKTGENIPVS).

The protein belongs to the bacterial histone-like protein family. In terms of assembly, heterodimer of an alpha and a beta chain.

In terms of biological role, this protein is one of the two subunits of integration host factor, a specific DNA-binding protein that functions in genetic recombination as well as in transcriptional and translational control. In Actinobacillus succinogenes (strain ATCC 55618 / DSM 22257 / CCUG 43843 / 130Z), this protein is Integration host factor subunit alpha.